The chain runs to 55 residues: Large ribosomal subunit protein bL33 (55 aa).

It belongs to the bacterial ribosomal protein bL33 family.

This chain is Large ribosomal subunit protein bL33, found in Pseudarthrobacter chlorophenolicus (strain ATCC 700700 / DSM 12829 / CIP 107037 / JCM 12360 / KCTC 9906 / NCIMB 13794 / A6) (Arthrobacter chlorophenolicus).